A 167-amino-acid polypeptide reads, in one-letter code: uncharacterized protein (167 aa).

Helical transmembrane passes span 21 to 41 (KIGL…IYKP) and 87 to 107 (MIIT…YVFG). Positions 136–159 (RKQRLKEQREKKEQKKEQKKEKKT) are enriched in basic and acidic residues. The segment at 136-167 (RKQRLKEQREKKEQKKEQKKEKKTERRKKKKL) is disordered.

The protein resides in the membrane. This is an uncharacterized protein from Schizosaccharomyces pombe (strain 972 / ATCC 24843) (Fission yeast).